The primary structure comprises 112 residues: NNVTIIVMITNLLENGRKKCDQYWPHDGREQYKHISVTLRDVDIYANYIVRSFQLRNTKLSKRRSRNNERRILQYHYTQWPDHGTPEYILPLLKFIRISSVVSSPESGPIVV.

The 112-residue stretch at 1 to 112 folds into the Tyrosine-protein phosphatase domain; sequence NNVTIIVMIT…SSPESGPIVV (112 aa). Position 82 (Asp82) interacts with substrate.

The protein belongs to the protein-tyrosine phosphatase family.

The enzyme catalyses O-phospho-L-tyrosyl-[protein] + H2O = L-tyrosyl-[protein] + phosphate. This Styela plicata (Wrinkled sea squirt) protein is Tyrosine-protein phosphatase 7 (STY-7).